Reading from the N-terminus, the 303-residue chain is Magainins (303 aa).

An N-terminal signal peptide occupies residues 1–18 (MFKGLFICSLIAVICANA). 13 consecutive propeptides follow at residues 19–26 (LPQPEASA), 33–36 (REVR), 62–72 (DAEAVGPEAFA), 79–82 (REVR), 108–118 (DAEAVGPEAFA), 125–128 (REVR), 154–164 (DAEAVGPEAFA), 171–174 (REVR), 200–210 (DAEAVGPEAFA), 217–220 (REVR), 246–256 (DAEAVGPEAFA), 263–266 (REVR), and 292–303 (DAEAVDDRRWVE).

This sequence belongs to the gastrin/cholecystokinin family. Magainin subfamily. In terms of tissue distribution, synthesized in the stomach and stored in a novel granular multinucleated cell in the gastric mucosa. It is stored as active, processed peptides in large granules within the granular gland secretions of the skin.

The protein resides in the secreted. Functionally, antimicrobial peptides that inhibit the growth of numerous species of bacteria and fungi and induce osmotic lysis of protozoa. Rapidly inactivates channel catfish herpesvirus (ED(50)=48 uM) over a wide temperature range. Magainins are membrane lytic agents. The chain is Magainins (magainins) from Xenopus laevis (African clawed frog).